The chain runs to 221 residues: NEDD8 ultimate buster 1 (221 aa).

3 UBA domains span residues 1-19 (LGLRACDGNVDHAAVHIAN), 30-76 (EERE…LLHN), and 95-135 (SPSQ…LVHN). The tract at residues 136–193 (GGRLPPDLQLSAEDSSSTPSTSPSDSAGTSSASTDEDMETEAVNEILEDIPEHEEDYL) is disordered. Residues 146-168 (SAEDSSSTPSTSPSDSAGTSSAS) show a composition bias toward low complexity. Residues 169–193 (TDEDMETEAVNEILEDIPEHEEDYL) show a composition bias toward acidic residues.

As to quaternary structure, directly interacts with NEDD8 and PSMD4/S5a, a member of the regulatory subunit of the 26S proteasome. Interacts with AIPL1.

Its subcellular location is the nucleus. Functionally, specific down-regulator of the NEDD8 conjugation system. Recruits NEDD8 and its conjugates to the proteasome for degradation. This Bos taurus (Bovine) protein is NEDD8 ultimate buster 1 (NUB1).